The chain runs to 542 residues: Chaperonin GroEL 2 (542 aa).

ATP-binding positions include 30-33 (TLGP), lysine 51, 87-91 (DGTTT), glycine 415, and aspartate 494.

This sequence belongs to the chaperonin (HSP60) family. Forms a cylinder of 14 subunits composed of two heptameric rings stacked back-to-back. Interacts with the co-chaperonin GroES.

Its subcellular location is the cytoplasm. It carries out the reaction ATP + H2O + a folded polypeptide = ADP + phosphate + an unfolded polypeptide.. In terms of biological role, together with its co-chaperonin GroES, plays an essential role in assisting protein folding. The GroEL-GroES system forms a nano-cage that allows encapsulation of the non-native substrate proteins and provides a physical environment optimized to promote and accelerate protein folding. The sequence is that of Chaperonin GroEL 2 from Syntrophobacter fumaroxidans (strain DSM 10017 / MPOB).